The chain runs to 501 residues: Cobyric acid synthase (501 aa).

One can recognise a GATase cobBQ-type domain in the interval 251–446; the sequence is NIDIAIIRLS…LHGIFDSEEF (196 aa). Cys-332 functions as the Nucleophile in the catalytic mechanism. His-438 is a catalytic residue.

It belongs to the CobB/CobQ family. CobQ subfamily.

It functions in the pathway cofactor biosynthesis; adenosylcobalamin biosynthesis. Catalyzes amidations at positions B, D, E, and G on adenosylcobyrinic A,C-diamide. NH(2) groups are provided by glutamine, and one molecule of ATP is hydrogenolyzed for each amidation. The protein is Cobyric acid synthase of Clostridium botulinum (strain Alaska E43 / Type E3).